Here is a 190-residue protein sequence, read N- to C-terminus: DNA-binding transcriptional repressor TetR (190 aa).

The HTH tetR-type domain occupies 6-66 (ETRSAALLAV…AALDAHDASF (61 aa)). The segment at residues 29–48 (SMDSVAALAHASKTTIYRRW) is a DNA-binding region (H-T-H motif).

Homodimer.

In terms of biological role, binds to its own palindromic promoter and represses transcription of its operon; addition of tetracycline or doxycycline (but not tigecycline) interferes with DNA binding. Addition of TetX to the DNA-TetR-antibiotic complex restores DNA binding. The polypeptide is DNA-binding transcriptional repressor TetR (Mycobacteroides abscessus (strain ATCC 19977 / DSM 44196 / CCUG 20993 / CIP 104536 / JCM 13569 / NCTC 13031 / TMC 1543 / L948) (Mycobacterium abscessus)).